Consider the following 174-residue polypeptide: NADH-ubiquinone oxidoreductase chain 6 (174 aa).

5 helical membrane passes run 1–21 (MTYV…GFSS), 24–44 (SPIY…MIIL), 47–67 (GGAY…MVVF), 86–106 (FEVL…VLWV), and 151–171 (WLVV…IEIT).

The protein belongs to the complex I subunit 6 family. As to quaternary structure, core subunit of respiratory chain NADH dehydrogenase (Complex I) which is composed of 45 different subunits.

The protein resides in the mitochondrion inner membrane. It catalyses the reaction a ubiquinone + NADH + 5 H(+)(in) = a ubiquinol + NAD(+) + 4 H(+)(out). In terms of biological role, core subunit of the mitochondrial membrane respiratory chain NADH dehydrogenase (Complex I) which catalyzes electron transfer from NADH through the respiratory chain, using ubiquinone as an electron acceptor. Essential for the catalytic activity and assembly of complex I. This Papio hamadryas (Hamadryas baboon) protein is NADH-ubiquinone oxidoreductase chain 6 (MT-ND6).